The sequence spans 118 residues: Ribulose bisphosphate carboxylase small subunit (118 aa).

It belongs to the RuBisCO small chain family. Heterohexadecamer of 8 large and 8 small subunits.

Its subcellular location is the carboxysome. Its function is as follows. RuBisCO catalyzes two reactions: the carboxylation of D-ribulose 1,5-bisphosphate, the primary event in carbon dioxide fixation, as well as the oxidative fragmentation of the pentose substrate in the photorespiration process. Both reactions occur simultaneously and in competition at the same active site. Although the small subunit is not catalytic it is essential for maximal activity. The chain is Ribulose bisphosphate carboxylase small subunit from Thermosynechococcus vestitus (strain NIES-2133 / IAM M-273 / BP-1).